Reading from the N-terminus, the 435-residue chain is Serine/threonine-protein kinase 40 (435 aa).

The Protein kinase domain occupies 35-332 (FILGPRLGNS…DVLEALSAII (298 aa)). ATP-binding positions include 41 to 49 (LGNSPVPSI) and Lys-66. Catalysis depends on Asp-197, which acts as the Proton acceptor.

The protein belongs to the protein kinase superfamily. CAMK Ser/Thr protein kinase family.

It is found in the nucleus. The protein localises to the cytoplasm. It catalyses the reaction L-seryl-[protein] + ATP = O-phospho-L-seryl-[protein] + ADP + H(+). The catalysed reaction is L-threonyl-[protein] + ATP = O-phospho-L-threonyl-[protein] + ADP + H(+). Functionally, may be a negative regulator of NF-kappa-B and p53-mediated gene transcription. This chain is Serine/threonine-protein kinase 40 (Stk40), found in Rattus norvegicus (Rat).